Consider the following 284-residue polypeptide: Eukaryotic translation initiation factor 3 subunit F (284 aa).

One can recognise an MPN domain in the interval 15–146 (VKVHPVVIFN…IHAYMAHNLS (132 aa)).

It belongs to the eIF-3 subunit F family. Component of the eukaryotic translation initiation factor 3 (eIF-3) complex.

It localises to the cytoplasm. Component of the eukaryotic translation initiation factor 3 (eIF-3) complex, which is involved in protein synthesis of a specialized repertoire of mRNAs and, together with other initiation factors, stimulates binding of mRNA and methionyl-tRNAi to the 40S ribosome. The eIF-3 complex specifically targets and initiates translation of a subset of mRNAs involved in cell proliferation. In Dictyostelium discoideum (Social amoeba), this protein is Eukaryotic translation initiation factor 3 subunit F (eif3f).